Here is a 293-residue protein sequence, read N- to C-terminus: UDP-N-acetylglucosamine transferase subunit ALG13 (293 aa).

Belongs to the glycosyltransferase 28 family. In terms of assembly, heterodimer with ALG14 to form a functional enzyme.

It is found in the endoplasmic reticulum. It catalyses the reaction an N-acetyl-alpha-D-glucosaminyl-diphospho-di-trans,poly-cis-dolichol + UDP-N-acetyl-alpha-D-glucosamine = an N,N'-diacetylchitobiosyl-diphospho-di-trans,poly-cis-dolichol + UDP + H(+). Its function is as follows. Involved in protein N-glycosylation. Essential for the second step of the dolichol-linked oligosaccharide pathway. The polypeptide is UDP-N-acetylglucosamine transferase subunit ALG13 (ALG13) (Candida albicans (strain SC5314 / ATCC MYA-2876) (Yeast)).